Reading from the N-terminus, the 192-residue chain is Interferon epsilon (192 aa).

Residues 1–21 (MVHRQLPETVLLLLVSSTIFS) form the signal peptide. Residues cysteine 52 and cysteine 162 are joined by a disulfide bond.

The protein belongs to the alpha/beta interferon family. As to expression, expressed at very high levels in uterus and, at much lower levels, in ovary and cervix. Very low levels, if any, in other organs. In the endometrium, expressed in the luminal and glandular epithelial cells (at protein level).

The protein resides in the secreted. Type I interferon required for maintaining basal levels of IFN-regulated genes, including 2'-5'-oligoadenylate synthetase, IRF7 and ISG15, in the female reproductive tract. Directly mediates protection against viral, including HSV-2, and bacterial, including Chlamydia muridarum, genital infections. The polypeptide is Interferon epsilon (Ifne) (Mus musculus (Mouse)).